The following is a 276-amino-acid chain: HUWE1-associated protein modifying stress responses 2 (276 aa).

Disordered regions lie at residues 146-182 (GKVP…TPVG), 204-238 (ISMR…PNSL), and 252-276 (VRKR…NRMV). The span at 149–165 (PPTPQPPRTPRMSPRPP) shows a compositional bias: pro residues. Composition is skewed to low complexity over residues 166 to 179 (AAAS…ESGT) and 208 to 219 (SGPPGSSSQDGG). Positions 252–276 (VRKRTSAQFGDGSADSPLHKRNRMV) are nuclear localization signal.

The protein belongs to the HAPSTR1 family. Homooligomer. Heterooligomer with HAPSTR1; the interaction is direct and stabilizes HAPSTR1 independently of HUWE1. Interacts with HUWE1.

It localises to the nucleus. Its function is as follows. Together with HAPSTR1 plays a central regulatory role in the cellular response to molecular stressors, such as DNA damage, nutrient scarcity, and protein misfolding. Regulates these multiple stress response signaling pathways by stabilizing HAPSTR1, but also independently of HAPSTR1. The sequence is that of HUWE1-associated protein modifying stress responses 2 from Mus musculus (Mouse).